Reading from the N-terminus, the 322-residue chain is Probable 2-oxoglutarate-dependent dioxygenase AOP1 (322 aa).

Positions 165 to 271 (TYYLTRLMKY…RYSTGLFSIP (107 aa)) constitute a Fe2OG dioxygenase domain. Residues H195, D197, and H252 each coordinate Fe cation. Residue R262 participates in 2-oxoglutarate binding.

The protein belongs to the iron/ascorbate-dependent oxidoreductase family. The cofactor is Fe(2+).

Functionally, probable 2-oxoglutarate-dependent dioxygenase that may be involved in glucosinolates biosynthesis. May play a role in the production of aliphatic glucosinolates. This Arabidopsis thaliana (Mouse-ear cress) protein is Probable 2-oxoglutarate-dependent dioxygenase AOP1 (AOP1).